The sequence spans 525 residues: Probable lipid II flippase MurJ (525 aa).

The next 14 helical transmembrane spans lie at 10-30, 32-52, 100-120, 140-160, 171-191, 203-223, 247-267, 285-305, 330-350, 368-388, 402-422, 423-443, 455-475, and 495-515; these read LLKS…LGLV, DVVV…FFAN, VLVT…TALF, LASL…FVAL, FAVS…CAWY, LAIG…PFLI, MIPA…DSFV, LLEF…LPAL, FLGI…LMVL, LLAY…APGY, IIAM…YGYV, GLAV…YRGL, TVWF…ALLW, and LTGL…LLGV.

The protein belongs to the MurJ/MviN family.

The protein resides in the cell inner membrane. Its pathway is cell wall biogenesis; peptidoglycan biosynthesis. Involved in peptidoglycan biosynthesis. Transports lipid-linked peptidoglycan precursors from the inner to the outer leaflet of the cytoplasmic membrane. This chain is Probable lipid II flippase MurJ, found in Vibrio cholerae serotype O1 (strain ATCC 39315 / El Tor Inaba N16961).